The sequence spans 246 residues: MSVIGRIHSFESCGTVDGPGIRFITFFQGCLMRCLYCHNRDTWDTHGGKEVTVEDLMKEVVTYRHFMNASGGGVTASGGEAILQAEFVRDWFRACKKEGIHTCLDTNGFVRRYDPVIDELLEVTDLVMLDLKQMNDEIHQNLVGVSNHRTLEFAKYLANKNVKVWIRYVVVPGWSDDDDSAHRLGEFTRDMGNVEKIELLPYHELGKHKWVAMGEEYKLDGVKPPKKETMERVKGILEQYGHKVMF.

Positions 16 to 239 (VDGPGIRFIT…MERVKGILEQ (224 aa)) constitute a Radical SAM core domain. The [4Fe-4S] cluster site is built by Cys-30, Cys-34, and Cys-37. Residues 36–38 (YCH), Gly-79, 130–132 (DLK), and His-203 contribute to the S-adenosyl-L-methionine site.

This sequence belongs to the organic radical-activating enzymes family. [4Fe-4S] cluster serves as cofactor.

Its subcellular location is the cytoplasm. It catalyses the reaction glycyl-[formate C-acetyltransferase] + reduced [flavodoxin] + S-adenosyl-L-methionine = glycin-2-yl radical-[formate C-acetyltransferase] + semiquinone [flavodoxin] + 5'-deoxyadenosine + L-methionine + H(+). Activation of pyruvate formate-lyase 1 under anaerobic conditions by generation of an organic free radical, using S-adenosylmethionine and reduced flavodoxin as cosubstrates to produce 5'-deoxy-adenosine. This Escherichia coli O157:H7 protein is Pyruvate formate-lyase 1-activating enzyme (pflA).